Consider the following 289-residue polypeptide: ATP phosphoribosyltransferase (289 aa).

This sequence belongs to the ATP phosphoribosyltransferase family. Long subfamily. It depends on Mg(2+) as a cofactor.

It localises to the cytoplasm. It carries out the reaction 1-(5-phospho-beta-D-ribosyl)-ATP + diphosphate = 5-phospho-alpha-D-ribose 1-diphosphate + ATP. Its pathway is amino-acid biosynthesis; L-histidine biosynthesis; L-histidine from 5-phospho-alpha-D-ribose 1-diphosphate: step 1/9. Feedback inhibited by histidine. Functionally, catalyzes the condensation of ATP and 5-phosphoribose 1-diphosphate to form N'-(5'-phosphoribosyl)-ATP (PR-ATP). Has a crucial role in the pathway because the rate of histidine biosynthesis seems to be controlled primarily by regulation of HisG enzymatic activity. This is ATP phosphoribosyltransferase from Solibacter usitatus (strain Ellin6076).